A 727-amino-acid chain; its full sequence is Elongation factor 2 (727 aa).

Residues Asp-19–Leu-260 form the tr-type G domain. GTP contacts are provided by residues Ala-28–Thr-35, Asp-94–His-98, and Asn-148–Asp-151. His-603 carries the diphthamide modification.

This sequence belongs to the TRAFAC class translation factor GTPase superfamily. Classic translation factor GTPase family. EF-G/EF-2 subfamily.

The protein resides in the cytoplasm. Its function is as follows. Catalyzes the GTP-dependent ribosomal translocation step during translation elongation. During this step, the ribosome changes from the pre-translocational (PRE) to the post-translocational (POST) state as the newly formed A-site-bound peptidyl-tRNA and P-site-bound deacylated tRNA move to the P and E sites, respectively. Catalyzes the coordinated movement of the two tRNA molecules, the mRNA and conformational changes in the ribosome. The sequence is that of Elongation factor 2 from Methanococcus maripaludis (strain C5 / ATCC BAA-1333).